The following is a 213-amino-acid chain: 3,4-dihydroxy-2-butanone 4-phosphate synthase (213 aa).

Residues 37–38, D42, 150–154, and E174 contribute to the D-ribulose 5-phosphate site; these read RE and RSGHT. Residue E38 coordinates Mg(2+). H153 contributes to the Mg(2+) binding site.

This sequence belongs to the DHBP synthase family. In terms of assembly, homodimer. Requires Mg(2+) as cofactor. Mn(2+) serves as cofactor.

The enzyme catalyses D-ribulose 5-phosphate = (2S)-2-hydroxy-3-oxobutyl phosphate + formate + H(+). The protein operates within cofactor biosynthesis; riboflavin biosynthesis; 2-hydroxy-3-oxobutyl phosphate from D-ribulose 5-phosphate: step 1/1. Catalyzes the conversion of D-ribulose 5-phosphate to formate and 3,4-dihydroxy-2-butanone 4-phosphate. The protein is 3,4-dihydroxy-2-butanone 4-phosphate synthase of Blochmanniella floridana.